Consider the following 340-residue polypeptide: Uroporphyrinogen decarboxylase (340 aa).

Substrate contacts are provided by residues 23–27, Asp72, Tyr147, Thr202, and His316; that span reads RQAGR.

Belongs to the uroporphyrinogen decarboxylase family. In terms of assembly, homodimer.

It localises to the cytoplasm. The catalysed reaction is uroporphyrinogen III + 4 H(+) = coproporphyrinogen III + 4 CO2. It functions in the pathway porphyrin-containing compound metabolism; protoporphyrin-IX biosynthesis; coproporphyrinogen-III from 5-aminolevulinate: step 4/4. In terms of biological role, catalyzes the decarboxylation of four acetate groups of uroporphyrinogen-III to yield coproporphyrinogen-III. The sequence is that of Uroporphyrinogen decarboxylase from Geobacter sulfurreducens (strain ATCC 51573 / DSM 12127 / PCA).